We begin with the raw amino-acid sequence, 477 residues long: Glycogen synthase (477 aa).

Lysine 15 lines the ADP-alpha-D-glucose pocket.

Belongs to the glycosyltransferase 1 family. Bacterial/plant glycogen synthase subfamily.

The catalysed reaction is [(1-&gt;4)-alpha-D-glucosyl](n) + ADP-alpha-D-glucose = [(1-&gt;4)-alpha-D-glucosyl](n+1) + ADP + H(+). It participates in glycan biosynthesis; glycogen biosynthesis. Its function is as follows. Synthesizes alpha-1,4-glucan chains using ADP-glucose. The polypeptide is Glycogen synthase (Streptococcus pneumoniae (strain 70585)).